Here is a 94-residue protein sequence, read N- to C-terminus: Co-chaperonin GroES (94 aa).

The protein belongs to the GroES chaperonin family. In terms of assembly, heptamer of 7 subunits arranged in a ring. Interacts with the chaperonin GroEL.

Its subcellular location is the cytoplasm. Its function is as follows. Together with the chaperonin GroEL, plays an essential role in assisting protein folding. The GroEL-GroES system forms a nano-cage that allows encapsulation of the non-native substrate proteins and provides a physical environment optimized to promote and accelerate protein folding. GroES binds to the apical surface of the GroEL ring, thereby capping the opening of the GroEL channel. This chain is Co-chaperonin GroES, found in Ligilactobacillus salivarius (strain UCC118) (Lactobacillus salivarius).